Reading from the N-terminus, the 467-residue chain is Transcription factor fos-1 (467 aa).

The segment covering methionine 1–asparagine 22 has biased composition (low complexity). 2 disordered regions span residues methionine 1–proline 38 and glutamine 139–arginine 179. A bZIP domain is found at aspartate 163–histidine 226. Positions lysine 165–lysine 205 are basic motif. Positions isoleucine 212–leucine 219 are leucine-zipper. Disordered regions lie at residues arginine 266–aspartate 291 and glutamine 395–leucine 467. Over residues serine 273–histidine 286 the composition is skewed to low complexity. The span at serine 434 to threonine 454 shows a compositional bias: polar residues. Threonine 440, threonine 452, and threonine 454 each carry phosphothreonine.

Belongs to the bZIP family. Fos subfamily. As to quaternary structure, homodimer. Heterodimer; with jun-1. Interacts with kgb-1 and hda-1. In terms of processing, may be phosphorylated by kgb-1. Phosphorylation at Thr-440 increases sensitivity to heavy metal stress. Phosphorylation inhibits homodimer formation, and promotes association with target promoters. In terms of tissue distribution, expressed in anchor cells. Isoform a is expressed in somatic gonad cells that neighbor anchor cells. Isoform b is expressed in vulval cells, the uterine cells that neighbor anchor cells and the spermatheca.

It localises to the nucleus. Its function is as follows. Developmentally regulated transcription factor which binds and recognizes the enhancer DNA sequence 5'-TGA[CG]TCA-3'. Plays a role the development of the reproductive system, controlling events including anchor cell (AC) fusion and invasion. Regulates downstream transcriptional targets, including zmp-1, cdh-3, him-4 and mig10b, to promote the removal of the gonadal basement membrane during AC invasion. Regulates aff-1 expression to promote AC fusion. With jun-1 regulates egl-1 and lin-12 expression to allow uterine cell specification and development. Functionally, required for ovulation. Controls plc-1 expression in the spermatheca to regulate spermathecal valve dilation. Acts with hda-1 as a downstream repressor of the kgb-1 mediated stress response pathway that transcriptionally represses genes involved in the response to heavy metals, such as kreg-1. The sequence is that of Transcription factor fos-1 from Caenorhabditis elegans.